The following is a 372-amino-acid chain: GDP-mannose 4,6-dehydratase (372 aa).

NADP(+) is bound by residues 9 to 14, 64 to 65, 86 to 90, and Tyr101; these read GVTGQD, DL, and LGAQS. Residue Thr133 is part of the active site. Active-site nucleophile residues include Glu135 and Tyr157. NADP(+)-binding residues include Lys161, His187, and Arg192.

Belongs to the NAD(P)-dependent epimerase/dehydratase family. GDP-mannose 4,6-dehydratase subfamily. NADP(+) is required as a cofactor.

It carries out the reaction GDP-alpha-D-mannose = GDP-4-dehydro-alpha-D-rhamnose + H2O. It functions in the pathway nucleotide-sugar biosynthesis; GDP-L-fucose biosynthesis via de novo pathway; GDP-L-fucose from GDP-alpha-D-mannose: step 1/2. Functionally, catalyzes the conversion of GDP-D-mannose to GDP-4-dehydro-6-deoxy-D-mannose. The sequence is that of GDP-mannose 4,6-dehydratase from Vibrio cholerae.